A 105-amino-acid chain; its full sequence is Met repressor (105 aa).

This sequence belongs to the MetJ family. In terms of assembly, homodimer.

Its subcellular location is the cytoplasm. This regulatory protein, when combined with SAM (S-adenosylmethionine) represses the expression of the methionine regulon and of enzymes involved in SAM synthesis. This Pasteurella multocida (strain Pm70) protein is Met repressor.